Consider the following 351-residue polypeptide: Photosystem II D2 protein (351 aa).

The chain crosses the membrane as a helical span at residues 39 to 59 (CAFLALGGWLTGTTFVTSWYT). His116 contacts chlorophyll a. The helical transmembrane segment at 123 to 139 (GFMLRQFEIARLVGIRP) threads the bilayer. Residues Gln128 and Asn141 each coordinate pheophytin a. Residues 151–164 (VFVSVFLMYPLGQS) form a helical membrane-spanning segment. His196 contacts chlorophyll a. A helical membrane pass occupies residues 206–226 (GALLCAIHGATVENTLFEDGE). Residues His213 and Phe260 each coordinate a plastoquinone. His213 provides a ligand contact to Fe cation. His267 contributes to the Fe cation binding site. The helical transmembrane segment at 277-293 (GLWMSAVGIVGLALNLR) threads the bilayer.

The protein belongs to the reaction center PufL/M/PsbA/D family. As to quaternary structure, PSII is composed of 1 copy each of membrane proteins PsbA, PsbB, PsbC, PsbD, PsbE, PsbF, PsbH, PsbI, PsbJ, PsbK, PsbL, PsbM, PsbT, PsbX, PsbY, PsbZ, Psb30/Ycf12, peripheral proteins PsbO, CyanoQ (PsbQ), PsbU, PsbV and a large number of cofactors. It forms dimeric complexes. Requires The D1/D2 heterodimer binds P680, chlorophylls that are the primary electron donor of PSII, and subsequent electron acceptors. It shares a non-heme iron and each subunit binds pheophytin, quinone, additional chlorophylls, carotenoids and lipids. There is also a Cl(-1) ion associated with D1 and D2, which is required for oxygen evolution. The PSII complex binds additional chlorophylls, carotenoids and specific lipids. as cofactor.

It localises to the cellular thylakoid membrane. It carries out the reaction 2 a plastoquinone + 4 hnu + 2 H2O = 2 a plastoquinol + O2. Functionally, photosystem II (PSII) is a light-driven water:plastoquinone oxidoreductase that uses light energy to abstract electrons from H(2)O, generating O(2) and a proton gradient subsequently used for ATP formation. It consists of a core antenna complex that captures photons, and an electron transfer chain that converts photonic excitation into a charge separation. The D1/D2 (PsbA/PsbD) reaction center heterodimer binds P680, the primary electron donor of PSII as well as several subsequent electron acceptors. D2 is needed for assembly of a stable PSII complex. This is Photosystem II D2 protein from Nostoc sp. (strain PCC 7120 / SAG 25.82 / UTEX 2576).